The chain runs to 257 residues: Phosphonates import ATP-binding protein PhnC 1 (257 aa).

The 245-residue stretch at 2–246 (LKITNLTKRY…EMDTIYAGVP (245 aa)) folds into the ABC transporter domain. 35-42 (GSSGAGKS) is a binding site for ATP.

It belongs to the ABC transporter superfamily. Phosphonates importer (TC 3.A.1.9.1) family. The complex is composed of two ATP-binding proteins (PhnC), two transmembrane proteins (PhnE) and a solute-binding protein (PhnD).

The protein resides in the cell inner membrane. The catalysed reaction is phosphonate(out) + ATP + H2O = phosphonate(in) + ADP + phosphate + H(+). In terms of biological role, part of the ABC transporter complex PhnCDE involved in phosphonates import. Responsible for energy coupling to the transport system. This Ruegeria sp. (strain TM1040) (Silicibacter sp.) protein is Phosphonates import ATP-binding protein PhnC 1.